The sequence spans 445 residues: Cholesterol side-chain cleavage enzyme, mitochondrial (445 aa).

The transit peptide at 1–36 (RGLPSRSVFLRGCQASLSTAQERLGHPGVPTREGVR) directs the protein to the mitochondrion.

Belongs to the cytochrome P450 family. Interacts with FDX1/adrenodoxin. The cofactor is heme.

It is found in the mitochondrion inner membrane. It carries out the reaction 6 reduced [adrenodoxin] + cholesterol + 3 O2 + 6 H(+) = 4-methylpentanal + pregnenolone + 6 oxidized [adrenodoxin] + 4 H2O. The enzyme catalyses 2 reduced [adrenodoxin] + cholesterol + O2 + 2 H(+) = (22R)-hydroxycholesterol + 2 oxidized [adrenodoxin] + H2O. The catalysed reaction is (22R)-hydroxycholesterol + 2 reduced [adrenodoxin] + O2 + 2 H(+) = (20R,22R)-20,22-dihydroxycholesterol + 2 oxidized [adrenodoxin] + H2O. It catalyses the reaction (20R,22R)-20,22-dihydroxycholesterol + 2 reduced [adrenodoxin] + O2 + 2 H(+) = 4-methylpentanal + pregnenolone + 2 oxidized [adrenodoxin] + 2 H2O. It functions in the pathway lipid metabolism; C21-steroid hormone metabolism. It participates in steroid metabolism; cholesterol metabolism. A cytochrome P450 monooxygenase that catalyzes the side-chain hydroxylation and cleavage of cholesterol to pregnenolone, the precursor of most steroid hormones. Catalyzes three sequential oxidation reactions of cholesterol, namely the hydroxylation at C22 followed with the hydroxylation at C20 to yield 20R,22R-hydroxycholesterol that is further cleaved between C20 and C22 to yield the C21-steroid pregnenolone and 4-methylpentanal. Mechanistically, uses molecular oxygen inserting one oxygen atom into a substrate and reducing the second into a water molecule. Two electrons are provided by NADPH via a two-protein mitochondrial transfer system comprising flavoprotein FDXR (adrenodoxin/ferredoxin reductase) and nonheme iron-sulfur protein FDX1 or FDX2 (adrenodoxin/ferredoxin). In Oryctolagus cuniculus (Rabbit), this protein is Cholesterol side-chain cleavage enzyme, mitochondrial (CYP11A1).